The chain runs to 224 residues: (S)-2-haloacid dehalogenase H-109 (224 aa).

The active-site Nucleophile is the Asp10. An (S)-2-haloacid contacts are provided by residues 11–12 (LY), Arg41, and 118–119 (SN). The interval 175–180 (SSNSWD) is important for catalytic activity.

The protein belongs to the HAD-like hydrolase superfamily. S-2-haloalkanoic acid dehalogenase family.

It catalyses the reaction an (S)-2-haloacid + H2O = a (2R)-2-hydroxycarboxylate + a halide anion + H(+). The catalysed reaction is (S)-2-chloropropanoate + H2O = (R)-lactate + chloride + H(+). Catalyzes the hydrolytic dehalogenation of small (S)-2-haloalkanoic acids to yield the corresponding (R)-2-hydroxyalkanoic acids. Acts on acids of short chain lengths, C(2) to C(4), with inversion of configuration at C-2. Active with 2-halogenated carboxylic acids and converts only the S-isomer (or L-isomer) of 2-chloropropionic acid with inversion of configuration to produce R-lactate (or D-isomer). The sequence is that of (S)-2-haloacid dehalogenase H-109 from Pseudomonas putida (Arthrobacter siderocapsulatus).